The sequence spans 243 residues: tRNA (guanine-N(1)-)-methyltransferase (243 aa).

S-adenosyl-L-methionine contacts are provided by residues Gly-111 and Ile-130–Leu-135.

Belongs to the RNA methyltransferase TrmD family. Homodimer.

It localises to the cytoplasm. The catalysed reaction is guanosine(37) in tRNA + S-adenosyl-L-methionine = N(1)-methylguanosine(37) in tRNA + S-adenosyl-L-homocysteine + H(+). Its function is as follows. Specifically methylates guanosine-37 in various tRNAs. This Acholeplasma laidlawii (strain PG-8A) protein is tRNA (guanine-N(1)-)-methyltransferase.